The sequence spans 397 residues: Cysteine desulfurase IscS (397 aa).

Pyridoxal 5'-phosphate contacts are provided by residues 72–73 (GS), N152, Q180, and 200–202 (SAH). K203 bears the N6-(pyridoxal phosphate)lysine mark. T238 contributes to the pyridoxal 5'-phosphate binding site. Residue C328 is the Cysteine persulfide intermediate of the active site. C328 lines the [2Fe-2S] cluster pocket.

It belongs to the class-V pyridoxal-phosphate-dependent aminotransferase family. NifS/IscS subfamily. Homodimer. Forms a heterotetramer with IscU, interacts with other sulfur acceptors. Requires pyridoxal 5'-phosphate as cofactor.

Its subcellular location is the cytoplasm. It catalyses the reaction (sulfur carrier)-H + L-cysteine = (sulfur carrier)-SH + L-alanine. It functions in the pathway cofactor biosynthesis; iron-sulfur cluster biosynthesis. Master enzyme that delivers sulfur to a number of partners involved in Fe-S cluster assembly, tRNA modification or cofactor biosynthesis. Catalyzes the removal of elemental sulfur atoms from cysteine to produce alanine. Functions as a sulfur delivery protein for Fe-S cluster synthesis onto IscU, an Fe-S scaffold assembly protein, as well as other S acceptor proteins. In Clostridium botulinum (strain Kyoto / Type A2), this protein is Cysteine desulfurase IscS.